The following is a 715-amino-acid chain: ATP-binding cassette sub-family B member 10, mitochondrial (715 aa).

A mitochondrion-targeting transit peptide spans 1–82 (MRAPSARALL…SSGARRCWVL (82 aa)). Over 83-133 (AGPRAAHPLFARLQGAAATGVRDLGNDSQRRPAATGRSEVWKLLGLVRPER) the chain is Mitochondrial matrix. The chain crosses the membrane as a helical span at residues 134–157 (GRLSAAVGFLAVSSVITMSAPFFL). The ABC transmembrane type-1 domain occupies 136–422 (LSAAVGFLAV…LSSFYSELMK (287 aa)). Residues 158 to 178 (GRIIDVIYTNPSEGYGDSLTR) are Mitochondrial intermembrane-facing. The chain crosses the membrane as a helical span at residues 179–201 (LCAVLTCVFLCGAAANGIRVYLM). Topologically, residues 202-252 (QSSGQSIVNRLRTSLFSSILRQEVAFFDKTRTGELINRLSSDTALLGRSVT) are mitochondrial matrix. Lysine 230 carries the post-translational modification N6-acetyllysine. The chain crosses the membrane as a helical span at residues 253-275 (ENLSDGLRAGAQASVGVGMMFFV). Residues 276 to 278 (SPS) lie on the Mitochondrial intermembrane side of the membrane. The helical transmembrane segment at 279–298 (LATFVLSVVPPISVLAVIYG) threads the bilayer. Residues 299-357 (RYLRKLSKATQDSLAEATQLAEERIGNIRTIRAFGKEMTEVEKYTGRVDQLLQLAQKEA) lie on the Mitochondrial matrix side of the membrane. The chain crosses the membrane as a helical span at residues 358 to 381 (LARAGFFGAAGLSGNLIVLSVLYK). The Mitochondrial intermembrane portion of the chain corresponds to 382–395 (GGLLMGSAHMTVGE). A helical membrane pass occupies residues 396–417 (LSSFLMYAFWVGLSIGGLSSFY). Residues 418 to 715 (SELMKGLGAG…AEQFLEPARA (298 aa)) are Mitochondrial matrix-facing. Residues 457-696 (LEFRNVHFTY…PNGLYRKLMN (240 aa)) form the ABC transporter domain. The ATP site is built by glycine 495, glycine 497, lysine 498, serine 499, and threonine 500. Serine 499 is a binding site for Mg(2+). Position 547 is an S-glutathionyl cysteine (cysteine 547). Aspartate 623 contributes to the Mg(2+) binding site.

It belongs to the ABC transporter superfamily. ABCB family. Mitochondrial peptide exporter (TC 3.A.1.212) subfamily. As to quaternary structure, homodimer or homooligomer. Interacts with PAAT; this interaction regulates ABCB10. Interacts with SLC25A37; this interaction stabilizes SLC25A37 and enhances the function of SLC25A37 to import mitochondrial iron during erythroid differentiation. Interacts with FECH; this interaction may allow the formation of the oligomeric complex with SLC25A37. Forms a complex with ABCB7 and FECH, where a dimeric FECH bridges ABCB7 and ABCB10 homodimers; this complex may be required for cellular iron homeostasis, mitochondrial function and heme biosynthesis. Expressed at particularly high levels in fetal liver, and erythroid tissues of embryos and adults. Found also in adult bone marrow, liver and kidney, and at lower levels in heart, brain and spleen.

The protein resides in the mitochondrion inner membrane. The enzyme catalyses biliverdin IXalpha(in) + ATP + H2O = biliverdin IXalpha(out) + ADP + phosphate + H(+). With respect to regulation, oxidized glutathione (GSSG) stimulates ATP hydrolysis without affecting ATP binding, whereas reduced glutathione (GSH) inhibits ATP binding and hydrolysis. Functionally, ATP-dependent transporter located in the mitochondrial inner membrane that catalyzes the export of biliverdin from the mitochondrial matrix, and plays a crucial role in hemoglobin synthesis and antioxidative stress. Participates in the early step of the heme biosynthetic process during insertion of iron into protoporphyrin IX (PPIX). Involved in the stabilization of the iron transporter mitoferrin-1/SLC25A37. In addition may be involved in mitochondrial unfolded protein response (UPRmt) signaling pathway, although ABCB10 probably does not participate in peptide export from mitochondria. This chain is ATP-binding cassette sub-family B member 10, mitochondrial, found in Mus musculus (Mouse).